The primary structure comprises 397 residues: DNA-directed RNA polymerase subunit Rpo1C (397 aa).

The protein belongs to the RNA polymerase beta' chain family. Part of the RNA polymerase complex. An artificial construct of the RNAP clamp domain (including part of this protein) contacts transcription elongation factors Spt4 and Spt5.

It is found in the cytoplasm. The catalysed reaction is RNA(n) + a ribonucleoside 5'-triphosphate = RNA(n+1) + diphosphate. DNA-dependent RNA polymerase (RNAP) catalyzes the transcription of DNA into RNA using the four ribonucleoside triphosphates as substrates. Forms part of the jaw domain. This is DNA-directed RNA polymerase subunit Rpo1C from Pyrococcus furiosus (strain ATCC 43587 / DSM 3638 / JCM 8422 / Vc1).